The primary structure comprises 260 residues: Thrombin-like enzyme acutobin (260 aa).

The first 18 residues, 1–18 (MVLIRVLANLLILQLSYA), serve as a signal peptide directing secretion. The propeptide occupies 19-24 (QKSSEL). The Peptidase S1 domain occupies 25 to 251 (VIGGVECDIN…YNDWIRSITA (227 aa)). 6 disulfide bridges follow: Cys31-Cys165, Cys52-Cys68, Cys102-Cys258, Cys144-Cys212, Cys176-Cys191, and Cys202-Cys227. The Charge relay system role is filled by His67. N-linked (GlcNAc...) asparagine glycans are attached at residues Asn101 and Asn105. Catalysis depends on Asp112, which acts as the Charge relay system. Asn124 carries an N-linked (GlcNAc...) asparagine glycan. The active-site Charge relay system is Ser206. Asn253 carries N-linked (GlcNAc...) asparagine glycosylation.

This sequence belongs to the peptidase S1 family. Snake venom subfamily. As to quaternary structure, monomer. N-glycosylated. As to expression, expressed by the venom gland.

It is found in the secreted. Thrombin-like snake venom serine protease that coagulates human fibrinogen by hydrolysis of the alpha chains (FGA). In Deinagkistrodon acutus (Hundred-pace snake), this protein is Thrombin-like enzyme acutobin.